Reading from the N-terminus, the 164-residue chain is UPF0478 protein SSP1024 (164 aa).

Residues 7 to 27 traverse the membrane as a helical segment; sequence IAGIIAAVAFLILVIGIVVVL. The interval 136 to 164 is disordered; the sequence is RNRRDSANYKTSSVANETNHSYTTRVDNK. The span at 143-164 shows a compositional bias: polar residues; the sequence is NYKTSSVANETNHSYTTRVDNK.

This sequence belongs to the UPF0478 family.

The protein resides in the cell membrane. The protein is UPF0478 protein SSP1024 of Staphylococcus saprophyticus subsp. saprophyticus (strain ATCC 15305 / DSM 20229 / NCIMB 8711 / NCTC 7292 / S-41).